Here is a 407-residue protein sequence, read N- to C-terminus: Argininosuccinate synthase (407 aa).

ATP is bound by residues 13–21 (AYSGGLDTS) and A40. Y91 and S96 together coordinate L-citrulline. Residue G121 participates in ATP binding. L-aspartate contacts are provided by T123, N127, and D128. N127 contacts L-citrulline. R131, S182, S191, E267, and Y279 together coordinate L-citrulline.

It belongs to the argininosuccinate synthase family. Type 1 subfamily. As to quaternary structure, homotetramer.

Its subcellular location is the cytoplasm. The enzyme catalyses L-citrulline + L-aspartate + ATP = 2-(N(omega)-L-arginino)succinate + AMP + diphosphate + H(+). The protein operates within amino-acid biosynthesis; L-arginine biosynthesis; L-arginine from L-ornithine and carbamoyl phosphate: step 2/3. The sequence is that of Argininosuccinate synthase from Bartonella bacilliformis (strain ATCC 35685 / KC583 / Herrer 020/F12,63).